A 484-amino-acid polypeptide reads, in one-letter code: Suppressor of fused homolog (484 aa).

Residues 1 to 21 (MAELRPSVAPGPAAPPASGPS) are disordered. Pro residues predominate over residues 12-21 (PAAPPASGPS). Residue K257 forms a Glycyl lysine isopeptide (Lys-Gly) (interchain with G-Cter in ubiquitin) linkage. The segment at 279–360 (SRPPEDEEDS…SSTAIIPHEL (82 aa)) is disordered. S301 carries the phosphoserine modification. The residue at position 303 (K303) is an N6-acetyllysine. A Glycyl lysine isopeptide (Lys-Gly) (interchain with G-Cter in SUMO2) cross-link involves residue K321. A compositionally biased stretch (basic and acidic residues) spans 336–347 (THDRAPSRKDSL). Phosphoserine occurs at positions 342, 346, and 352. The residue at position 353 (T353) is a Phosphothreonine. S481 is modified (phosphoserine).

Belongs to the SUFU family. May form homodimers. Interacts with ULK3; inactivating the protein kinase activity of ULK3. Interacts with RAB23. Part of a DNA-bound corepressor complex containing SAP18, GLI1 and SIN3. Part of a complex containing CTNNB1. Binds BTRC, GLI2, GLI3, SAP18 and STK36. Binds both free and DNA-bound GLI1. Interacts with KIF7. Interacts with GLI3FL and this interaction regulates the formation of either repressor or activator forms of GLI3. Its association with GLI3FL is regulated by Hh signaling and dissociation of the SUFU-GLI3 interaction requires the presence of the ciliary motor KIF3A. Polyubiquitinated at Lys-257 by the SCF(FBXL17) complex, leading to its subsequent degradation and allowing the release of GLI1 for proper hedgehog/smoothened signal transduction. Ubiquitination is impaired by phosphorylation at Ser-342, Ser-346, Ser-352 and Thr-353. In terms of processing, phosphorylation at Ser-342, Ser-346, Ser-352 and Thr-353 prevents ubiquitination by the SCF(FBXL17) complex. In terms of tissue distribution, widely expressed in adult and fetal tissues.

It is found in the cytoplasm. It localises to the nucleus. In terms of biological role, negative regulator in the hedgehog/smoothened signaling pathway. Down-regulates GLI1-mediated transactivation of target genes. Part of a corepressor complex that acts on DNA-bound GLI1. May also act by linking GLI1 to BTRC and thereby targeting GLI1 to degradation by the proteasome. Sequesters GLI1, GLI2 and GLI3 in the cytoplasm, this effect is overcome by binding of STK36 to both SUFU and a GLI protein. Negative regulator of beta-catenin signaling. Regulates the formation of either the repressor form (GLI3R) or the activator form (GLI3A) of the full-length form of GLI3 (GLI3FL). GLI3FL is complexed with SUFU in the cytoplasm and is maintained in a neutral state. Without the Hh signal, the SUFU-GLI3 complex is recruited to cilia, leading to the efficient processing of GLI3FL into GLI3R. When Hh signaling is initiated, SUFU dissociates from GLI3FL and the latter translocates to the nucleus, where it is phosphorylated, destabilized, and converted to a transcriptional activator (GLI3A). Required for normal embryonic development. Required for the proper formation of hair follicles and the control of epidermal differentiation. The sequence is that of Suppressor of fused homolog from Mus musculus (Mouse).